A 262-amino-acid polypeptide reads, in one-letter code: MSTALEARKAGFATGGATLVHNVDLAVAQGELIAIVGPNGAGKSTLLRMLSGDLRPTSGSVRLGDRELSSYSPRELADRRAVLAQHINVSFPFTVEEIVRMGTGDVGHRKAGALIDAALHEVGLGEFRSRDITTLSGGEQQRAHFARVLVQLWSSEAVRGPGILLLDEPTSSLDIRHQLDLAHTARRCARNGATVIAILHDLNLATRFAERIVVMHRGAVAADGPPSTVMRPELIGAVFDVELTVQMDASGSPFVLPELTRA.

The region spanning L5–E242 is the ABC transporter domain. Residue G37–S44 participates in ATP binding.

It belongs to the ABC transporter superfamily. Heme (hemin) importer (TC 3.A.1.14.5) family. The complex is composed of two ATP-binding proteins (HmuV), two transmembrane proteins (HmuU) and a solute-binding protein (HmuT).

It localises to the cell inner membrane. Part of the ABC transporter complex HmuTUV involved in hemin import. Responsible for energy coupling to the transport system. In Rhodopseudomonas palustris (strain HaA2), this protein is Hemin import ATP-binding protein HmuV.